Consider the following 436-residue polypeptide: Trigger factor (436 aa).

One can recognise a PPIase FKBP-type domain in the interval 161-246 (GDQLNIDFVG…VNSVSAPQLP (86 aa)).

This sequence belongs to the FKBP-type PPIase family. Tig subfamily.

Its subcellular location is the cytoplasm. The catalysed reaction is [protein]-peptidylproline (omega=180) = [protein]-peptidylproline (omega=0). Involved in protein export. Acts as a chaperone by maintaining the newly synthesized protein in an open conformation. Functions as a peptidyl-prolyl cis-trans isomerase. This is Trigger factor from Ectopseudomonas mendocina (strain ymp) (Pseudomonas mendocina).